Here is a 347-residue protein sequence, read N- to C-terminus: Heat-inducible transcription repressor HrcA (347 aa).

It belongs to the HrcA family.

Its function is as follows. Negative regulator of class I heat shock genes (grpE-dnaK-dnaJ and groELS operons). Prevents heat-shock induction of these operons. This chain is Heat-inducible transcription repressor HrcA, found in Sorangium cellulosum (strain So ce56) (Polyangium cellulosum (strain So ce56)).